Consider the following 600-residue polypeptide: Torsin-1A-interacting protein 1 (600 aa).

Residues Met1 to Gly14 show a composition bias toward basic and acidic residues. Disordered regions lie at residues Met1 to Ser261 and Met310 to Ser346. At Met1–Arg354 the chain is on the nuclear side. Ser61 bears the Phosphoserine mark. 3 stretches are compositionally biased toward basic and acidic residues: residues Phe71–Arg81, Phe91–Glu102, and Arg116–Thr125. Ser137, Ser145, Ser156, Ser158, Ser159, and Ser189 each carry phosphoserine. The segment covering Pro192–Ser203 has biased composition (low complexity). Over residues Glu219–Asp232 the composition is skewed to acidic residues. A Phosphothreonine modification is found at Thr223. Residues Ser230, Ser233, and Ser244 each carry the phosphoserine modification. The segment covering Ser247–Ser261 has biased composition (polar residues). Ser322 is modified (phosphoserine). Lys325 participates in a covalent cross-link: Glycyl lysine isopeptide (Lys-Gly) (interchain with G-Cter in SUMO2). The segment covering Lys325–Ser346 has biased composition (polar residues). A Phosphoserine modification is found at Ser332. The chain crosses the membrane as a helical span at residues Tyr355 to Tyr371. At Thr372–Leu600 the chain is on the perinuclear space side. Residues Arg373–Leu600 form an interaction with TOR1A region. Residues Glu376–Ser452 adopt a coiled-coil conformation. A glycan (N-linked (GlcNAc...) asparagine) is linked at Asn416.

The protein belongs to the TOR1AIP family. Interacts with ATP1B4. Interacts with TOR1A (ATP-bound). Interacts with TOR1B, TOR2A and TOR3A. Interacts with VIM.

Its subcellular location is the nucleus inner membrane. Its function is as follows. Required for nuclear membrane integrity. Induces TOR1A and TOR1B ATPase activity and is required for their location on the nuclear membrane. Binds to A- and B-type lamins. Possible role in membrane attachment and assembly of the nuclear lamina. The sequence is that of Torsin-1A-interacting protein 1 (TOR1AIP1) from Bos taurus (Bovine).